A 347-amino-acid chain; its full sequence is Mitochondrial glycine transporter (347 aa).

3 Solcar repeats span residues 18–102 (SKPT…LRTA), 138–222 (LSHT…SKRS), and 247–331 (STAS…LIMW). The next 6 membrane-spanning stretches (helical) occupy residues 24–49 (FAAG…TRVQ), 77–103 (GTLP…RTAV), 144–169 (LITG…VRYE), 197–220 (GFGA…EQSK), 251–277 (INFI…KTRV), and 306–324 (GLGL…AWTV).

This sequence belongs to the mitochondrial carrier (TC 2.A.29) family. SLC25A38 subfamily.

It localises to the mitochondrion inner membrane. It catalyses the reaction glycine(in) = glycine(out). Its function is as follows. Mitochondrial glycine transporter that imports glycine into the mitochondrial matrix. Plays an important role in providing glycine for the first enzymatic step in heme biosynthesis, the condensation of glycine with succinyl-CoA to produce 5-aminolevulinate (ALA) in the mitochondrial matrix. This chain is Mitochondrial glycine transporter, found in Coccidioides immitis (strain RS) (Valley fever fungus).